Consider the following 695-residue polypeptide: Elongation factor G (695 aa).

The region spanning 10 to 285 is the tr-type G domain; it reads DKTRNIGIMA…GVVDYLPSPL (276 aa). Residues 19–26, 83–87, and 137–140 each bind GTP; these read AHIDAGKT, DTPGH, and NKMD.

This sequence belongs to the TRAFAC class translation factor GTPase superfamily. Classic translation factor GTPase family. EF-G/EF-2 subfamily.

The protein localises to the cytoplasm. Its function is as follows. Catalyzes the GTP-dependent ribosomal translocation step during translation elongation. During this step, the ribosome changes from the pre-translocational (PRE) to the post-translocational (POST) state as the newly formed A-site-bound peptidyl-tRNA and P-site-bound deacylated tRNA move to the P and E sites, respectively. Catalyzes the coordinated movement of the two tRNA molecules, the mRNA and conformational changes in the ribosome. This Latilactobacillus sakei subsp. sakei (strain 23K) (Lactobacillus sakei subsp. sakei) protein is Elongation factor G.